A 42-amino-acid polypeptide reads, in one-letter code: MTNIIKVGVIVAFLAALVVFDRSEQKAALHTEATVSAQVKHA.

This is an uncharacterized protein from Pasteurella multocida (strain Pm70).